The sequence spans 289 residues: Formamidopyrimidine-DNA glycosylase (289 aa).

Residue Pro-2 is the Schiff-base intermediate with DNA of the active site. Catalysis depends on Glu-3, which acts as the Proton donor. Lys-61 acts as the Proton donor; for beta-elimination activity in catalysis. Positions 97, 119, and 168 each coordinate DNA. The segment at 254–288 adopts an FPG-type zinc-finger fold; the sequence is NAYGRAGKPCPRCGEPIVRVQWTNRSSHFCPQCQS. Arg-278 serves as the catalytic Proton donor; for delta-elimination activity.

The protein belongs to the FPG family. Monomer. The cofactor is Zn(2+).

The catalysed reaction is Hydrolysis of DNA containing ring-opened 7-methylguanine residues, releasing 2,6-diamino-4-hydroxy-5-(N-methyl)formamidopyrimidine.. It catalyses the reaction 2'-deoxyribonucleotide-(2'-deoxyribose 5'-phosphate)-2'-deoxyribonucleotide-DNA = a 3'-end 2'-deoxyribonucleotide-(2,3-dehydro-2,3-deoxyribose 5'-phosphate)-DNA + a 5'-end 5'-phospho-2'-deoxyribonucleoside-DNA + H(+). Functionally, involved in base excision repair of DNA damaged by oxidation or by mutagenic agents. Acts as a DNA glycosylase that recognizes and removes damaged bases. Has a preference for oxidized purines, such as 7,8-dihydro-8-oxoguanine (8-oxoG). Has AP (apurinic/apyrimidinic) lyase activity and introduces nicks in the DNA strand. Cleaves the DNA backbone by beta-delta elimination to generate a single-strand break at the site of the removed base with both 3'- and 5'-phosphates. The polypeptide is Formamidopyrimidine-DNA glycosylase (Corynebacterium urealyticum (strain ATCC 43042 / DSM 7109)).